Reading from the N-terminus, the 97-residue chain is MSRICELTGKGRQVGHNVSHANNKTKRTFLPNLQNVTLISDSLGKGVKLRVSTHGLRSVEHVGGLDNWLLKTSDDLLSLRARRLKRDIAKKQQAVAA.

The protein belongs to the bacterial ribosomal protein bL28 family.

The chain is Large ribosomal subunit protein bL28 from Rhizorhabdus wittichii (strain DSM 6014 / CCUG 31198 / JCM 15750 / NBRC 105917 / EY 4224 / RW1) (Sphingomonas wittichii).